Reading from the N-terminus, the 475-residue chain is Peroxisome proliferator-activated receptor gamma (475 aa).

O-linked (GlcNAc) threonine glycosylation is present at threonine 54. Serine 82 carries the post-translational modification Phosphoserine; by MAPK. Residues 106 to 180 constitute a DNA-binding region (nuclear receptor); the sequence is AIECRVCGDK…VGMSHNAIRF (75 aa). NR C4-type zinc fingers lie at residues 109–129 and 146–168; these read CRVC…CEGC and CDLN…FQKC. An interaction with FAM120B region spans residues 175 to 250; the sequence is HNAIRFGRMP…DKSPFVIYDM (76 aa). The NR LBD domain occupies 208-473; it reads DLRALAKHLY…HPLLQEIYKD (266 aa). A Glycyl lysine isopeptide (Lys-Gly) (interchain with G-Cter in ubiquitin) cross-link involves residue lysine 222. Residues 465 to 473 carry the 9aaTAD motif; the sequence is PLLQEIYKD.

This sequence belongs to the nuclear hormone receptor family. NR1 subfamily. Interacts with FOXO1 (acetylated form). Heterodimer with other nuclear receptors, such as RXRA. The heterodimer with the retinoic acid receptor RXRA is called adipocyte-specific transcription factor ARF6. Interacts with NCOA6 coactivator, leading to a strong increase in transcription of target genes. Interacts with coactivator PPARBP, leading to a mild increase in transcription of target genes. Interacts with NOCA7 in a ligand-inducible manner. Interacts with NCOA1 and NCOA2 LXXLL motifs. Interacts with ASXL1, ASXL2, DNTTIP2, FAM120B, MAP2K1/MEK1, NR0B2, PDPK1, PRDM16, PRMT2 and TGFB1I1. Interacts (when activated by agonist) with PPP5C. Interacts with HELZ2 and THRAP3; the interaction stimulates the transcriptional activity of PPARG. Interacts with PER2, the interaction is ligand dependent and blocks PPARG recruitment to target promoters. Interacts with NOCT. Interacts with ACTN4. Interacts (when in the liganded conformation) with GPS2. Interacts with CRY1 and CRY2 in a ligand-dependent manner. In the absence of hormonal ligand, interacts with TACC1. In macrophages, interacts with PAQR3 and STUB1; the interactions promote PPARG poylubiquitination and STUB1-mediated degradation. Post-translationally, O-GlcNAcylation at Thr-54 reduces transcriptional activity in adipocytes. Phosphorylated at basal conditions and dephosphorylated when treated with the ligand. May be dephosphorylated by PPP5C. The phosphorylated form may be inactive and dephosphorylation induces adipogenic activity. In terms of processing, ubiquitinated by E3 ubiquitin-protein ligase complex containing FBXO9; leading to proteasomal degradation. Ubiquitinated at Lys-222 by TRIM55 leading to proteasomal degradation. Ubiquitinated by E3 ubiquitin-protein ligase STUB1/CHIP; leading to proteasomal degradation.

Its subcellular location is the nucleus. The protein resides in the cytoplasm. Its activity is regulated as follows. PDPK1 activates its transcriptional activity independently of its kinase activity. Interacts with HELZ2 and THRAP3; the interaction enhances the transcriptional activity of PPARG. In terms of biological role, nuclear receptor that binds peroxisome proliferators such as hypolipidemic drugs and fatty acids. Once activated by a ligand, the nuclear receptor binds to DNA specific PPAR response elements (PPRE) and modulates the transcription of its target genes, such as acyl-CoA oxidase. It therefore controls the peroxisomal beta-oxidation pathway of fatty acids. Key regulator of adipocyte differentiation and glucose homeostasis. ARF6 acts as a key regulator of the tissue-specific adipocyte P2 (aP2) enhancer. Acts as a critical regulator of gut homeostasis by suppressing NF-kappa-B-mediated pro-inflammatory responses. Plays a role in the regulation of cardiovascular circadian rhythms by regulating the transcription of BMAL1 in the blood vessels. This Cricetulus griseus (Chinese hamster) protein is Peroxisome proliferator-activated receptor gamma (PPARG).